The following is a 203-amino-acid chain: MTLRPSLLPLRLLLLLLLLLRGAVCQAEAGSETESPVRTLQVETLVEPPEPCAEPATFGDTLHIHYSGSLVDGRIFDTSLTRDPLVIELGQKQVIPGLEQSLLDMCVGEKRRVIIPSHLAYGKRGFPPSIPADAELHFDVELIALIRANYWQKLVKGILPLVGMAMVPALLGLIGYHLYRKASSPKISKNKLKEEKRNKSKKK.

The N-terminal stretch at Met-1–Ala-29 is a signal peptide. Residues Gly-59 to Ile-146 form the PPIase FKBP-type domain. Residues Ile-158 to Leu-178 form a helical membrane-spanning segment.

The protein belongs to the FKBP-type PPIase family. Interacts with IFITM5.

The protein resides in the membrane. It catalyses the reaction [protein]-peptidylproline (omega=180) = [protein]-peptidylproline (omega=0). Its function is as follows. PPIases accelerate the folding of proteins during protein synthesis. The polypeptide is Peptidyl-prolyl cis-trans isomerase FKBP11 (FKBP11) (Bos taurus (Bovine)).